Here is a 380-residue protein sequence, read N- to C-terminus: Dynactin subunit 2 (380 aa).

The disordered stretch occupies residues 1–32 (MADPKFQNLPGIAYDQPDVYETPDDPELDTSD). Over residues 21 to 32 (ETPDDPELDTSD) the composition is skewed to acidic residues. Phosphoserine occurs at positions 49, 58, and 86. Coiled-coil stretches lie at residues 100–135 (VQKCQRLQIEMNELLNEVAALQVDRKVADEEKQSYD) and 353–377 (ETFAQNLETINSKVAKVEQRVAAIS).

Belongs to the dynactin subunit 2 family. Subunit of dynactin, a multiprotein complex associated with dynein.

It is found in the cytoplasm. It localises to the cytoskeleton. The protein localises to the membrane. Its function is as follows. Modulates cytoplasmic dynein binding to an organelle, and plays a role in prometaphase chromosome alignment and spindle organization during mitosis. May play a role in synapse formation during brain development. This Drosophila melanogaster (Fruit fly) protein is Dynactin subunit 2.